An 819-amino-acid polypeptide reads, in one-letter code: FYN-binding protein 1 (819 aa).

The segment covering 1 to 45 (MAKFNTGSNPTEEAATSSRPFKVAGQSSPSGIQSRKNLFDNQGNA) has biased composition (polar residues). The interval 1–490 (MAKFNTGSNP…REKKEQELKK (490 aa)) is disordered. At K3 the chain carries N6-acetyllysine. A phosphoserine mark is found at S28 and S46. Positions 69 to 79 (TYEEKPEKEPK) are enriched in basic and acidic residues. Pro residues predominate over residues 150-160 (GPKPGPAPPVP). Residue S222 is modified to Phosphoserine. 2 stretches are compositionally biased toward basic and acidic residues: residues 237-248 (PPKEDPEDKDHG) and 273-285 (NFEE…KTDL). S318 carries the phosphoserine modification. Pro residues-rich tracts occupy residues 342–351 (GPPPPKPNRP) and 380–412 (LPPP…PRNI). Positions 439 to 453 (LEEEQESEGETYEDI) are enriched in acidic residues. Residue S445 is modified to Phosphoserine. Positions 448–495 (ETYEDIDSSKERDKKREKEEKKRLELERKEQKEREKKEQELKKKFKLT) form a coiled coil. Basic and acidic residues predominate over residues 454–489 (DSSKERDKKREKEEKKRLELERKEQKEREKKEQELK). Residues 479-493 (KEREKKEQELKKKFK) carry the Nuclear localization signal motif. An SH3 1 domain is found at 499–560 (QVIHHAKACC…KTTAVEIDYD (62 aa)). Phosphotyrosine is present on Y559. 2 positions are modified to phosphoserine: S561 and S568. The SH2-binding; to LCP2 signature appears at 584–587 (YDDV). Disordered stretches follow at residues 589 to 635 (EQDA…DEKT) and 649 to 728 (KDDR…EKEE). Residues 610-626 (TDDEIYDGIEEEDDDDG) show a composition bias toward acidic residues. The SH2-binding; to FYN signature appears at 615 to 618 (YDGI). Basic and acidic residues predominate over residues 649–664 (KDDRKKSIREKPKVSE). The segment covering 668 to 677 (NEGSSLPSQH) has biased composition (polar residues). Positions 682 to 692 (VGEEVYDDVDA) are enriched in acidic residues. Y687 is subject to Phosphotyrosine. A Nuclear localization signal motif is present at residues 710–736 (RAKTEEKDPKKLKKQEKEEKDLRKKFK). Positions 711 to 728 (AKTEEKDPKKLKKQEKEE) are enriched in basic and acidic residues. In terms of domain architecture, SH3 2 spans 736 to 804 (KYDGEIRVLY…LRSYLVDNDG (69 aa)).

Part of a complex consisting of SKAP2, FYB1 and PTPNS1. Part of a complex consisting of SKAP2, FYB1 and PIRB. Part of a complex consisting of SKAP1, FYB1 and CLNK. Interacts with CLNK (via its SH2 domain); this interaction allows SKAP1 and FYB1 to recruit FYN to the complex, thus promoting the phosphorylation of CLNK by FYN. Interacts with FYN. Interacts with LCP2. Interacts with SKAP1. Interacts with SKAP2. Interacts with FASLG. Interacts with EVL. Interacts with TMEM47. Interacts with LCK. Post-translationally, T-cell receptor ligation leads to increased tyrosine phosphorylation. As to expression, expressed in hematopoietic tissues such as myeloid and T-cells, spleen and thymus. Not expressed in B-cells, nor in non-lymphoid tissues. FYB-130 is preferentially expressed in mature T-cells compared to FYB-120, whereas thymocytes showed a greater relative amount of FYB-120. Expressed in podocytes.

It localises to the cytoplasm. The protein localises to the nucleus. The protein resides in the cell junction. Functionally, acts as an adapter protein of the FYN and LCP2 signaling cascades in T-cells. May play a role in linking T-cell signaling to remodeling of the actin cytoskeleton. Modulates the expression of IL2. Involved in platelet activation. Prevents the degradation of SKAP1 and SKAP2. May be involved in high affinity immunoglobulin epsilon receptor signaling in mast cells. This chain is FYN-binding protein 1 (Fyb1), found in Mus musculus (Mouse).